Reading from the N-terminus, the 501-residue chain is Sugar phosphate exchanger 3 (501 aa).

A helical transmembrane segment spans residues 20-40; it reads CTHHHIVVFLLTFFSYSLLHA. N-linked (GlcNAc...) asparagine glycosylation is present at N62. 5 helical membrane-spanning segments follow: residues 87–107, 119–139, 153–173, 183–203, and 214–234; these read TLFL…GLFV, WVLS…GTLT, LWVV…AVMG, FVFG…AFLA, and AFLV…CGLL. The N-linked (GlcNAc...) asparagine glycan is linked to N273. The next 6 membrane-spanning stretches (helical) occupy residues 298–320, 340–360, 364–384, 393–413, 435–455, and 459–479; these read GVVL…FFWL, IWYD…SDVL, APVL…YSRS, VIMA…SSAI, GIVD…VSLI, and LGWM…ILFI.

This sequence belongs to the major facilitator superfamily. Organophosphate:Pi antiporter (OPA) (TC 2.A.1.4) family.

It localises to the endoplasmic reticulum membrane. Its subcellular location is the lysosome membrane. Its function is as follows. Unlike the other SLC37 members, seems to lack glucose-6-phosphate antiporter activity. The chain is Sugar phosphate exchanger 3 (SLC37A3) from Gallus gallus (Chicken).